Consider the following 315-residue polypeptide: Aspartate carbamoyltransferase catalytic subunit (315 aa).

R54 and T55 together coordinate carbamoyl phosphate. K82 is an L-aspartate binding site. Carbamoyl phosphate is bound by residues R104, H134, and Q137. The L-aspartate site is built by R174 and R229. Residues G270 and P271 each contribute to the carbamoyl phosphate site.

The protein belongs to the aspartate/ornithine carbamoyltransferase superfamily. ATCase family. As to quaternary structure, heterododecamer (2C3:3R2) of six catalytic PyrB chains organized as two trimers (C3), and six regulatory PyrI chains organized as three dimers (R2).

The enzyme catalyses carbamoyl phosphate + L-aspartate = N-carbamoyl-L-aspartate + phosphate + H(+). Its pathway is pyrimidine metabolism; UMP biosynthesis via de novo pathway; (S)-dihydroorotate from bicarbonate: step 2/3. Functionally, catalyzes the condensation of carbamoyl phosphate and aspartate to form carbamoyl aspartate and inorganic phosphate, the committed step in the de novo pyrimidine nucleotide biosynthesis pathway. This chain is Aspartate carbamoyltransferase catalytic subunit, found in Leifsonia xyli subsp. xyli (strain CTCB07).